We begin with the raw amino-acid sequence, 491 residues long: Chromosomal replication initiator protein DnaA (491 aa).

Residues 1–68 (MTSIWGQIQH…RTAACGVIGD (68 aa)) are domain I, interacts with DnaA modulators. The domain II stretch occupies residues 68–146 (DTVEVVVTAG…PLDWAPVPQS (79 aa)). Residues 147-364 (RTNWRFSFDD…SCLHNLILKA (218 aa)) are domain III, AAA+ region. The ATP site is built by G190, G192, K193, and T194. Residues 365–491 (KLLNRQISLE…RNGRITHARH (127 aa)) form a domain IV, binds dsDNA region.

This sequence belongs to the DnaA family. Oligomerizes as a right-handed, spiral filament on DNA at oriC.

The protein resides in the cytoplasm. Plays an essential role in the initiation and regulation of chromosomal replication. ATP-DnaA binds to the origin of replication (oriC) to initiate formation of the DNA replication initiation complex once per cell cycle. Binds the DnaA box (a 9 base pair repeat at the origin) and separates the double-stranded (ds)DNA. Forms a right-handed helical filament on oriC DNA; dsDNA binds to the exterior of the filament while single-stranded (ss)DNA is stabiized in the filament's interior. The ATP-DnaA-oriC complex binds and stabilizes one strand of the AT-rich DNA unwinding element (DUE), permitting loading of DNA polymerase. After initiation quickly degrades to an ADP-DnaA complex that is not apt for DNA replication. Binds acidic phospholipids. The sequence is that of Chromosomal replication initiator protein DnaA from Nitratidesulfovibrio vulgaris (strain ATCC 29579 / DSM 644 / CCUG 34227 / NCIMB 8303 / VKM B-1760 / Hildenborough) (Desulfovibrio vulgaris).